The chain runs to 219 residues: Small ribosomal subunit protein uS3c (219 aa).

The region spanning 43 to 120 is the KH type-2 domain; the sequence is IQNYIQKNMQ…KINITITKIT (78 aa).

This sequence belongs to the universal ribosomal protein uS3 family. As to quaternary structure, part of the 30S ribosomal subunit.

The protein resides in the plastid. The protein localises to the chloroplast. The protein is Small ribosomal subunit protein uS3c (rps3) of Oenothera elata subsp. hookeri (Hooker's evening primrose).